A 518-amino-acid polypeptide reads, in one-letter code: Bifunctional purine biosynthesis protein PurH (518 aa).

Residues 1 to 146 (MGRMALLSTS…KNHAHVTVLV (146 aa)) form the MGS-like domain.

It belongs to the PurH family.

It carries out the reaction (6R)-10-formyltetrahydrofolate + 5-amino-1-(5-phospho-beta-D-ribosyl)imidazole-4-carboxamide = 5-formamido-1-(5-phospho-D-ribosyl)imidazole-4-carboxamide + (6S)-5,6,7,8-tetrahydrofolate. The enzyme catalyses IMP + H2O = 5-formamido-1-(5-phospho-D-ribosyl)imidazole-4-carboxamide. It functions in the pathway purine metabolism; IMP biosynthesis via de novo pathway; 5-formamido-1-(5-phospho-D-ribosyl)imidazole-4-carboxamide from 5-amino-1-(5-phospho-D-ribosyl)imidazole-4-carboxamide (10-formyl THF route): step 1/1. The protein operates within purine metabolism; IMP biosynthesis via de novo pathway; IMP from 5-formamido-1-(5-phospho-D-ribosyl)imidazole-4-carboxamide: step 1/1. The sequence is that of Bifunctional purine biosynthesis protein PurH from Thermosynechococcus vestitus (strain NIES-2133 / IAM M-273 / BP-1).